We begin with the raw amino-acid sequence, 735 residues long: DNA replication licensing factor mcm5-B (735 aa).

In terms of domain architecture, MCM spans 332–538; the sequence is IYETVAKSIA…RDMTLAKHVM (207 aa). ADP is bound at residue Arg-372. The Arginine finger signature appears at 513-516; that stretch reads SRFD.

This sequence belongs to the MCM family. Component of the mcm2-7 complex (RLF-M). The complex forms a toroidal hexameric ring with the proposed subunit order mcm2-mcm6-mcm4-mcm7-mcm3-mcm5. The heterodimer of mmcm3/mcm5 interacts with mcm4, mmcm6, mcm7 and weakly with mcm2. Component of the CMG helicase complex, composed of the mcm2-7 complex, the GINS complex and cdc45.

The protein localises to the nucleus. It localises to the chromosome. It catalyses the reaction ATP + H2O = ADP + phosphate + H(+). In terms of biological role, acts as a component of the MCM2-7 complex (MCM complex) which is the replicative helicase essential for 'once per cell cycle' DNA replication initiation and elongation in eukaryotic cells. Core component of CDC45-MCM-GINS (CMG) helicase, the molecular machine that unwinds template DNA during replication, and around which the replisome is built. The active ATPase sites in the MCM2-7 ring are formed through the interaction surfaces of two neighboring subunits such that a critical structure of a conserved arginine finger motif is provided in trans relative to the ATP-binding site of the Walker A box of the adjacent subunit. The six ATPase active sites, however, are likely to contribute differentially to the complex helicase activity. The protein is DNA replication licensing factor mcm5-B (mcm5-b) of Xenopus laevis (African clawed frog).